The primary structure comprises 60 residues: MATKVKFKYKGEEKEVDISKIKKVWRVGKMISFTYDDNGKTGRGAVSEKDAPKELLEKLK.

Residues 37-60 (DNGKTGRGAVSEKDAPKELLEKLK) form a disordered region. The segment covering 46-60 (VSEKDAPKELLEKLK) has biased composition (basic and acidic residues).

Belongs to the 7 kDa DNA-binding/endoribonuclease P2 family. Monomer.

The protein localises to the cytoplasm. Functionally, can constrain negative DNA supercoils. May be involved in maintaining the integrity of the genome at high temperature. This is DNA-binding protein 7c from Acidianus hospitalis (strain W1).